Consider the following 143-residue polypeptide: Large ribosomal subunit protein uL16 (143 aa).

Belongs to the universal ribosomal protein uL16 family. In terms of assembly, part of the 50S ribosomal subunit.

Binds 23S rRNA and is also seen to make contacts with the A and possibly P site tRNAs. This chain is Large ribosomal subunit protein uL16, found in Caulobacter vibrioides (strain ATCC 19089 / CIP 103742 / CB 15) (Caulobacter crescentus).